The following is a 191-amino-acid chain: Apoptosis regulator BHRF1 (191 aa).

The interval 1–18 is interaction with host VRK2; it reads MAYSTREILLALCIRDSR. N-linked (GlcNAc...) asparagine; by host glycosylation occurs at asparagine 22. The BH1 signature appears at 89–109; sequence EIFHRGDPSLGRALAWMAWCM. Residues 89–142 form an interaction with host VRK2 region; it reads EIFHRGDPSLGRALAWMAWCMHACRTLCCNQSTPYYVVDLSVRGMLEASEGLDG. The N-linked (GlcNAc...) asparagine; by host glycan is linked to asparagine 118. The BH2 signature appears at 142 to 157; the sequence is GWIHQQGGWSTLIEDN. A helical membrane pass occupies residues 166 to 186; that stretch reads WTLFLAGLTLSLLVICSYLFI.

The protein belongs to the Bcl-2 family. In terms of assembly, interacts with isoform 1 of host VRK2; this interaction is involved in protecting cells from apoptosis. Interacts with host PRA1; this interaction seems to modulate BHRF1 anti-apoptotic activity. Interacts with host BCL2L11. Interacts with host BAD and BBC3. Interacts with BALF1; BALF1 acting as a negative regulator of the survival function of BHRF1. Interacts with host BECN1.

Its subcellular location is the host membrane. The protein resides in the host mitochondrion. Prevents premature death of the host cell during virus production, which would otherwise reduce the amount of progeny virus. Acts as a host B-cell leukemia/lymphoma 2 (Bcl-2) homolog, and interacts with pro-apoptotic proteins to prevent mitochondria permeabilization, release of cytochrome c and subsequent apoptosis of the host cell. In addition, plays a role in the inhibiton of host BECN1-mediated starvation-induced autophagy without affecting basal levels of autophagy. This Epstein-Barr virus (strain GD1) (HHV-4) protein is Apoptosis regulator BHRF1.